The chain runs to 460 residues: Interleukin-6 receptor subunit alpha (460 aa).

A signal peptide spans 1–19 (MLTVGCTLLVALLAAPAVA). Residues 20–116 (LVLGSCRALE…DVPPEEPKLS (97 aa)) enclose the Ig-like C2-type domain. Over 20-364 (LVLGSCRALE…VQESSSMSLP (345 aa)) the chain is Extracellular. 4 disulfide bridges follow: C25/C190, C47/C92, C117/C128, and C162/C173. Residues N32 and N55 are each glycosylated (N-linked (GlcNAc...) asparagine). Fibronectin type-III domains follow at residues 109–214 (PPEE…VQPD) and 215–313 (PPAN…TPWI). A glycan (N-linked (GlcNAc...) asparagine) is linked at N150. A glycan (N-linked (GlcNAc...) asparagine) is linked at N218. A WSXWS motif motif is present at residues 300–304 (WSEWS). The helical transmembrane segment at 365–385 (TFLVAGGSLAFGLLLCVFIIL) threads the bilayer. Residues 386-460 (RLKQKWKSEA…NSNRDYLFPR (75 aa)) lie on the Cytoplasmic side of the membrane.

Belongs to the type I cytokine receptor family. Type 3 subfamily. In terms of assembly, component of a hexamer of two molecules each of IL6, IL6R and IL6ST; first binds to IL6 to associate with the signaling subunit IL6ST. Interacts (via N-terminal ectodomain) with SORL1; this interaction may affect IL6-binding to IL6R, hence decrease IL6 'classic-signaling'. As to quaternary structure, also interacts with SORL1; this interaction leads to soluble IL6R internalization. May form a trimeric complex with the soluble SORL1 ectodomain and circulating IL6 receptor; this interaction might stabilize circulating IL6, hence promote IL6 'trans-signaling'. A short soluble form is also released from the membrane by proteolysis. The sIL6R is formed by limited proteolysis of membrane-bound receptors, a process referred to as ectodomain shedding. mIL6R is cleaved by the proteases ADAM10 and ADAM17. In terms of processing, glycosylated. Glycosylation is dispensable for transport, signaling, and cell-surface turnover. Glycosylation at Asn-55 is a protease-regulatory exosite. Glycosylation is required for ADAM17-mediated proteolysis. As to expression, expressed by dendritic cells. Detected in the cerebrospinal fluid.

It is found in the cell membrane. Its subcellular location is the secreted. With respect to regulation, classic and trans-signaling are both inhibited by tocilizumab, a humanized monoclonal antibody that blocks interleukin IL6R signaling. Part of the receptor for interleukin 6. Binds to IL6 with low affinity, but does not transduce a signal. Signal activation necessitate an association with IL6ST. Activation leads to the regulation of the immune response, acute-phase reactions and hematopoiesis. The interaction with membrane-bound IL6R and IL6ST stimulates 'classic signaling', the restricted expression of the IL6R limits classic IL6 signaling to only a few tissues such as the liver and some cells of the immune system. Whereas the binding of IL6 and soluble IL6R to IL6ST stimulates 'trans-signaling'. Alternatively, 'cluster signaling' occurs when membrane-bound IL6:IL6R complexes on transmitter cells activate IL6ST receptors on neighboring receiver cells. Functionally, signaling via the membrane-bound IL6R is mostly regenerative and anti-inflammatory. Drives naive CD4(+) T cells to the Th17 lineage, through 'cluster signaling' by dendritic cells. In terms of biological role, soluble form of IL6 receptor (sIL6R) that acts as an agonist of IL6 activity. The IL6:sIL6R complex (hyper-IL6) binds to IL6ST/gp130 on cell surfaces and induces signaling also on cells that do not express membrane-bound IL6R in a process called IL6 'trans-signaling'. sIL6R is causative for the pro-inflammatory properties of IL6 and an important player in the development of chronic inflammatory diseases. In complex with IL6, is required for induction of VEGF production. Plays a protective role during liver injury, being required for maintenance of tissue regeneration. 'Trans-signaling' in central nervous system regulates energy and glucose homeostasis. This is Interleukin-6 receptor subunit alpha from Mus musculus (Mouse).